A 350-amino-acid chain; its full sequence is Biotin synthase (350 aa).

One can recognise a Radical SAM core domain in the interval 42 to 269 (NEVQVSTLCS…QSHVRLSAGR (228 aa)). Residues Cys57, Cys61, and Cys64 each contribute to the [4Fe-4S] cluster site. The [2Fe-2S] cluster site is built by Cys101, Cys132, Cys192, and Arg264.

The protein belongs to the radical SAM superfamily. Biotin synthase family. Homodimer. [4Fe-4S] cluster serves as cofactor. It depends on [2Fe-2S] cluster as a cofactor.

It catalyses the reaction (4R,5S)-dethiobiotin + (sulfur carrier)-SH + 2 reduced [2Fe-2S]-[ferredoxin] + 2 S-adenosyl-L-methionine = (sulfur carrier)-H + biotin + 2 5'-deoxyadenosine + 2 L-methionine + 2 oxidized [2Fe-2S]-[ferredoxin]. It participates in cofactor biosynthesis; biotin biosynthesis; biotin from 7,8-diaminononanoate: step 2/2. Functionally, catalyzes the conversion of dethiobiotin (DTB) to biotin by the insertion of a sulfur atom into dethiobiotin via a radical-based mechanism. The protein is Biotin synthase of Saccharophagus degradans (strain 2-40 / ATCC 43961 / DSM 17024).